Reading from the N-terminus, the 519-residue chain is MEKVVTLNHDLPLLHFPNSRKPFSIPSPILRISSFKRHKKRSCLASSSRLGFYTETKTVSESHGVIVDNSTIGRRLLGLAAAVSVAVSLSIFCDSPALAESLTIAFPVSRAREVTTVQRTLVEAWGLIRETFVDPTFNHQDWDFKLQQTMVEMFPLRSADAAYGKLKAMLSTLGDPFTRLITPKEYQSFRIGSDGNLQGVGLFINSEPRTGHLVVMSCVEGSPADRAGIHEGEELVEINGEKLDDVDSEAAAQKLRGRVGTFVTIKLKNVNGSGTDSGIREVKLPRDYIKLSPISSAIIPHTTPDGRLAKTGYVKLTAFSQTAASDMENAVHEMENQDVQSYILDLRNNPGGLVRAGLDVAQLWLDGDETLVYTIDREGVTSPINMINGHAVTHDPLVVLVNEGSASASEILAGALHDNGRAILVGNRTFGKGKIQSITELNDGSALFVTVAKYLSPSLHEIDQVGIAPDVQCTTGMIDSLTAEIVEKMNSSVPLLEADSCVMVAEHELEARRSNGTAS.

The PDZ domain occupies 186 to 274 (YQSFRIGSDG…IKLKNVNGSG (89 aa)). Residues Ser407 and Lys432 each act as charge relay system in the active site.

It belongs to the peptidase S41A family.

It localises to the plastid. Its subcellular location is the chloroplast thylakoid lumen. The enzyme catalyses The enzyme shows specific recognition of a C-terminal tripeptide, Xaa-Yaa-Zaa, in which Xaa is preferably Ala or Leu, Yaa is preferably Ala or Tyr, and Zaa is preferably Ala, but then cleaves at a variable distance from the C-terminus. A typical cleavage is -Ala-Ala-|-Arg-Ala-Ala-Lys-Glu-Asn-Tyr-Ala-Leu-Ala-Ala.. In terms of biological role, protease involved in the C-terminal processing of the chloroplastic D1 protein of photosystem II. This proteolytic processing is necessary to allow the light-driven assembly of the tetranuclear manganese cluster, which is responsible for photosynthetic water oxidation. The polypeptide is Carboxyl-terminal-processing peptidase 3, chloroplastic (CTPA3) (Arabidopsis thaliana (Mouse-ear cress)).